Consider the following 488-residue polypeptide: Protein nucleotidyltransferase YdiU (488 aa).

Residues glycine 91, glycine 93, arginine 94, lysine 114, aspartate 126, glycine 127, arginine 177, and arginine 184 each coordinate ATP. The active-site Proton acceptor is the aspartate 253. Mg(2+)-binding residues include asparagine 254 and aspartate 263. ATP is bound at residue aspartate 263.

Belongs to the SELO family. Mg(2+) serves as cofactor. It depends on Mn(2+) as a cofactor.

The enzyme catalyses L-seryl-[protein] + ATP = 3-O-(5'-adenylyl)-L-seryl-[protein] + diphosphate. The catalysed reaction is L-threonyl-[protein] + ATP = 3-O-(5'-adenylyl)-L-threonyl-[protein] + diphosphate. It carries out the reaction L-tyrosyl-[protein] + ATP = O-(5'-adenylyl)-L-tyrosyl-[protein] + diphosphate. It catalyses the reaction L-histidyl-[protein] + UTP = N(tele)-(5'-uridylyl)-L-histidyl-[protein] + diphosphate. The enzyme catalyses L-seryl-[protein] + UTP = O-(5'-uridylyl)-L-seryl-[protein] + diphosphate. The catalysed reaction is L-tyrosyl-[protein] + UTP = O-(5'-uridylyl)-L-tyrosyl-[protein] + diphosphate. Nucleotidyltransferase involved in the post-translational modification of proteins. It can catalyze the addition of adenosine monophosphate (AMP) or uridine monophosphate (UMP) to a protein, resulting in modifications known as AMPylation and UMPylation. The chain is Protein nucleotidyltransferase YdiU from Bacillus cereus (strain ZK / E33L).